The following is a 235-amino-acid chain: Mediator of RNA polymerase II transcription subunit 29 (235 aa).

Positions 1 to 14 (MMNQMGMMMQQQGV) are enriched in low complexity. The disordered stretch occupies residues 1–54 (MMNQMGMMMQQQGVGVPGGPGGVGGVGMPGPGGVGVAPGMMQSPQMQQAQQQQV). Residues 15 to 36 (GVPGGPGGVGGVGMPGPGGVGV) are compositionally biased toward gly residues. The segment covering 37–54 (APGMMQSPQMQQAQQQQV) has biased composition (low complexity).

Belongs to the Mediator complex subunit 29 family. As to quaternary structure, component of the Mediator complex.

The protein localises to the nucleus. Its function is as follows. Component of the Mediator complex, a coactivator involved in the regulated transcription of nearly all RNA polymerase II-dependent genes. Mediator functions as a bridge to convey information from gene-specific regulatory proteins to the basal RNA polymerase II transcription machinery. Mediator is recruited to promoters by direct interactions with regulatory proteins and serves as a scaffold for the assembly of a functional preinitiation complex with RNA polymerase II and the general transcription factors. In Anopheles gambiae (African malaria mosquito), this protein is Mediator of RNA polymerase II transcription subunit 29 (ix).